The sequence spans 343 residues: Ribosomal RNA small subunit methyltransferase C (343 aa).

This sequence belongs to the methyltransferase superfamily. RsmC family. In terms of assembly, monomer.

The protein localises to the cytoplasm. The enzyme catalyses guanosine(1207) in 16S rRNA + S-adenosyl-L-methionine = N(2)-methylguanosine(1207) in 16S rRNA + S-adenosyl-L-homocysteine + H(+). In terms of biological role, specifically methylates the guanine in position 1207 of 16S rRNA in the 30S particle. This chain is Ribosomal RNA small subunit methyltransferase C, found in Escherichia coli O6:K15:H31 (strain 536 / UPEC).